Consider the following 311-residue polypeptide: Ciliary microtubule inner protein 2B (311 aa).

Disordered stretches follow at residues 64–93 (PFPP…LGDP) and 150–183 (QEGR…APFM).

Belongs to the CIMIP2 family. In terms of tissue distribution, expressed in airway epithelial cells.

Its subcellular location is the cytoplasm. The protein resides in the cytoskeleton. It localises to the cilium axoneme. Its function is as follows. Microtubule inner protein (MIP) part of the dynein-decorated doublet microtubules (DMTs) in cilia axoneme, which is required for motile cilia beating. This chain is Ciliary microtubule inner protein 2B (cimip2b), found in Xenopus laevis (African clawed frog).